The following is a 312-amino-acid chain: Acetyl-coenzyme A carboxylase carboxyl transferase subunit alpha (312 aa).

The region spanning 36-286 (ELEKEIEKTF…KTYFLESVKA (251 aa)) is the CoA carboxyltransferase C-terminal domain.

Belongs to the AccA family. As to quaternary structure, acetyl-CoA carboxylase is a heterohexamer composed of biotin carboxyl carrier protein (AccB), biotin carboxylase (AccC) and two subunits each of ACCase subunit alpha (AccA) and ACCase subunit beta (AccD).

It localises to the cytoplasm. The catalysed reaction is N(6)-carboxybiotinyl-L-lysyl-[protein] + acetyl-CoA = N(6)-biotinyl-L-lysyl-[protein] + malonyl-CoA. The protein operates within lipid metabolism; malonyl-CoA biosynthesis; malonyl-CoA from acetyl-CoA: step 1/1. Its function is as follows. Component of the acetyl coenzyme A carboxylase (ACC) complex. First, biotin carboxylase catalyzes the carboxylation of biotin on its carrier protein (BCCP) and then the CO(2) group is transferred by the carboxyltransferase to acetyl-CoA to form malonyl-CoA. The protein is Acetyl-coenzyme A carboxylase carboxyl transferase subunit alpha of Sulfurovum sp. (strain NBC37-1).